The sequence spans 446 residues: D-inositol 3-phosphate glycosyltransferase (446 aa).

A disordered region spans residues 1-21; sequence MSHYVGRLGRRSPAGSGRLRL. H34 provides a ligand contact to 1D-myo-inositol 3-phosphate. Residues 40 to 41 and G48 contribute to the UDP-N-acetyl-alpha-D-glucosamine site; that span reads QP. 1D-myo-inositol 3-phosphate-binding positions include 45 to 50, K103, Y136, T160, and R180; that span reads DAGGMN. Positions 255, 260, and 321 each coordinate UDP-N-acetyl-alpha-D-glucosamine. Mg(2+) is bound by residues F330, R331, and A333. 2 residues coordinate UDP-N-acetyl-alpha-D-glucosamine: E343 and E351. T357 provides a ligand contact to Mg(2+).

Belongs to the glycosyltransferase group 1 family. MshA subfamily. As to quaternary structure, homodimer.

It carries out the reaction 1D-myo-inositol 3-phosphate + UDP-N-acetyl-alpha-D-glucosamine = 1D-myo-inositol 2-acetamido-2-deoxy-alpha-D-glucopyranoside 3-phosphate + UDP + H(+). Functionally, catalyzes the transfer of a N-acetyl-glucosamine moiety to 1D-myo-inositol 3-phosphate to produce 1D-myo-inositol 2-acetamido-2-deoxy-glucopyranoside 3-phosphate in the mycothiol biosynthesis pathway. The chain is D-inositol 3-phosphate glycosyltransferase from Streptomyces scabiei (strain 87.22).